Reading from the N-terminus, the 109-residue chain is Small ribosomal subunit protein uS17 (109 aa).

This sequence belongs to the universal ribosomal protein uS17 family. Part of the 30S ribosomal subunit.

One of the primary rRNA binding proteins, it binds specifically to the 5'-end of 16S ribosomal RNA. The sequence is that of Small ribosomal subunit protein uS17 from Methanococcus maripaludis (strain DSM 14266 / JCM 13030 / NBRC 101832 / S2 / LL).